Here is a 365-residue protein sequence, read N- to C-terminus: tRNA N6-adenosine threonylcarbamoyltransferase (365 aa).

Fe cation-binding residues include H119 and H123. Residues 141-145 (LVSGG), D174, G187, and N288 contribute to the substrate site. D316 contacts Fe cation.

This sequence belongs to the KAE1 / TsaD family. The cofactor is Fe(2+).

The protein localises to the cytoplasm. It catalyses the reaction L-threonylcarbamoyladenylate + adenosine(37) in tRNA = N(6)-L-threonylcarbamoyladenosine(37) in tRNA + AMP + H(+). Its function is as follows. Required for the formation of a threonylcarbamoyl group on adenosine at position 37 (t(6)A37) in tRNAs that read codons beginning with adenine. Is involved in the transfer of the threonylcarbamoyl moiety of threonylcarbamoyl-AMP (TC-AMP) to the N6 group of A37, together with TsaE and TsaB. TsaD likely plays a direct catalytic role in this reaction. The chain is tRNA N6-adenosine threonylcarbamoyltransferase from Rhizobium leguminosarum bv. trifolii (strain WSM2304).